The primary structure comprises 559 residues: ATP-dependent RNA helicase HAS1 (559 aa).

Residues Met1–Gly90 form a disordered region. Basic and acidic residues-rich tracts occupy residues Ser9–Ala22 and Pro55–Lys75. The Q motif signature appears at Tyr93 to Ala121. The Helicase ATP-binding domain maps to Ile124 to Tyr300. Residue Ala137 to Thr144 participates in ATP binding. The DEAD box motif lies at Asp247–Asp250. In terms of domain architecture, Helicase C-terminal spans Gly314 to Ile484.

This sequence belongs to the DEAD box helicase family. DDX18/HAS1 subfamily. As to quaternary structure, associates in the nucleolus with the 60S and pre-60S ribosomal subunits.

It is found in the nucleus. The protein localises to the nucleolus. The enzyme catalyses ATP + H2O = ADP + phosphate + H(+). Its function is as follows. ATP-dependent RNA helicase involved in 40S ribosomal subunit biogenesis. Required for the processing and cleavage of 35S pre-rRNA at sites A0, A1, and A2, leading to mature 18S rRNA. In Lodderomyces elongisporus (strain ATCC 11503 / CBS 2605 / JCM 1781 / NBRC 1676 / NRRL YB-4239) (Yeast), this protein is ATP-dependent RNA helicase HAS1 (HAS1).